Reading from the N-terminus, the 144-residue chain is Catabolic 3-dehydroquinase (144 aa).

The active-site Proton acceptor is the tyrosine 24. The substrate site is built by asparagine 76, histidine 82, and aspartate 89. Histidine 102 serves as the catalytic Proton donor. Substrate is bound by residues 103 to 104 (IT) and arginine 113.

It belongs to the type-II 3-dehydroquinase family. Homododecamer. Adopts a ring-like structure, composed of an arrangement of two hexameric rings stacked on top of one another.

It carries out the reaction 3-dehydroquinate = 3-dehydroshikimate + H2O. It participates in aromatic compound metabolism; 3,4-dihydroxybenzoate biosynthesis; 3,4-dihydroxybenzoate from 3-dehydroquinate: step 1/2. Is involved in the catabolism of quinate. Allows the utilization of quinate as carbon source via the beta-ketoadipate pathway. The polypeptide is Catabolic 3-dehydroquinase (Debaryomyces hansenii (strain ATCC 36239 / CBS 767 / BCRC 21394 / JCM 1990 / NBRC 0083 / IGC 2968) (Yeast)).